Here is an 858-residue protein sequence, read N- to C-terminus: Coiled-coil and C2 domain-containing protein 1B (858 aa).

Disordered stretches follow at residues 112–164, 180–199, 204–284, 329–352, and 470–533; these read VLGV…GASQ, AAAS…CERG, ESQL…ALLS, VDLS…APTA, and EKLA…SPSV. The segment covering 114 to 143 has biased composition (acidic residues); the sequence is GVDEETEPLDGDEVADPGGSEEENGLEDTE. Residues 153-164 are compositionally biased toward low complexity; that stretch reads ASAPAAQAGASQ. Residues 166–212 adopt a coiled-coil conformation; that stretch reads LHALLEERIHNYREAAASAKEAGEAAKARRCERGLKTLESQLASVRR. Residues 186 to 199 are compositionally biased toward basic and acidic residues; that stretch reads EAGEAAKARRCERG. S209 is modified (phosphoserine). Positions 520–532 are enriched in low complexity; it reads PRASSSKESPSPS. S593 is subject to Phosphoserine. T596 carries the phosphothreonine modification. Residues 611–635 are a coiled coil; the sequence is RLSQKAEEVYAQLQKMLLEQQEKCL. The 140-residue stretch at 676–815 folds into the C2 domain; sequence DPPTHHFELK…ENECEIREIV (140 aa).

It belongs to the CC2D1 family. Interacts with CHMP4B. Widely distributed in brain and peripheral tissues.

The protein resides in the nucleus. In terms of biological role, transcription factor that binds specifically to the DRE (dual repressor element) and represses HTR1A gene transcription in neuronal cells. The polypeptide is Coiled-coil and C2 domain-containing protein 1B (CC2D1B) (Homo sapiens (Human)).